Here is a 289-residue protein sequence, read N- to C-terminus: Lipoyl synthase 1 (289 aa).

Residues Cys-33, Cys-38, Cys-44, Cys-59, Cys-63, Cys-66, and Ser-274 each coordinate [4Fe-4S] cluster. A Radical SAM core domain is found at 45–263; sequence FAGGTATFLI…RIGEEELGFL (219 aa).

The protein belongs to the radical SAM superfamily. Lipoyl synthase family. It depends on [4Fe-4S] cluster as a cofactor.

It is found in the cytoplasm. The enzyme catalyses [[Fe-S] cluster scaffold protein carrying a second [4Fe-4S](2+) cluster] + N(6)-octanoyl-L-lysyl-[protein] + 2 oxidized [2Fe-2S]-[ferredoxin] + 2 S-adenosyl-L-methionine + 4 H(+) = [[Fe-S] cluster scaffold protein] + N(6)-[(R)-dihydrolipoyl]-L-lysyl-[protein] + 4 Fe(3+) + 2 hydrogen sulfide + 2 5'-deoxyadenosine + 2 L-methionine + 2 reduced [2Fe-2S]-[ferredoxin]. The protein operates within protein modification; protein lipoylation via endogenous pathway; protein N(6)-(lipoyl)lysine from octanoyl-[acyl-carrier-protein]: step 2/2. Functionally, catalyzes the radical-mediated insertion of two sulfur atoms into the C-6 and C-8 positions of the octanoyl moiety bound to the lipoyl domains of lipoate-dependent enzymes, thereby converting the octanoylated domains into lipoylated derivatives. This Parasynechococcus marenigrum (strain WH8102) protein is Lipoyl synthase 1.